The primary structure comprises 208 residues: LexA repressor (208 aa).

The segment at residues 30 to 50 (VREICAAVKLSSTSTVHGHLA) is a DNA-binding region (H-T-H motif). Catalysis depends on for autocatalytic cleavage activity residues Ser129 and Lys167.

Belongs to the peptidase S24 family. As to quaternary structure, homodimer.

It catalyses the reaction Hydrolysis of Ala-|-Gly bond in repressor LexA.. Functionally, represses a number of genes involved in the response to DNA damage (SOS response), including recA and lexA. In the presence of single-stranded DNA, RecA interacts with LexA causing an autocatalytic cleavage which disrupts the DNA-binding part of LexA, leading to derepression of the SOS regulon and eventually DNA repair. This chain is LexA repressor, found in Lactobacillus helveticus (strain DPC 4571).